Reading from the N-terminus, the 67-residue chain is Prokaryotic ubiquitin-like protein Pup (67 aa).

Residues 1–11 (MAGQEQQQPQS) show a composition bias toward low complexity. The disordered stretch occupies residues 1–47 (MAGQEQQQPQSRESEFEDDAPATPPAPGEAQASAATQGVDDLLDEID). Positions 25–61 (PAPGEAQASAATQGVDDLLDEIDGVLESNAEEFVRAF) are ARC ATPase binding. Gln67 carries the deamidated glutamine modification. Gln67 participates in a covalent cross-link: Isoglutamyl lysine isopeptide (Gln-Lys) (interchain with K-? in acceptor proteins).

Belongs to the prokaryotic ubiquitin-like protein family. In terms of assembly, strongly interacts with the proteasome-associated ATPase ARC through a hydrophobic interface; the interacting region of Pup lies in its C-terminal half. There is one Pup binding site per ARC hexamer ring. Post-translationally, is modified by deamidation of its C-terminal glutamine to glutamate by the deamidase Dop, a prerequisite to the subsequent pupylation process.

Its pathway is protein degradation; proteasomal Pup-dependent pathway. Its function is as follows. Protein modifier that is covalently attached to lysine residues of substrate proteins, thereby targeting them for proteasomal degradation. The tagging system is termed pupylation. This is Prokaryotic ubiquitin-like protein Pup from Arthrobacter sp. (strain FB24).